The chain runs to 337 residues: Ornithine carbamoyltransferase (337 aa).

Carbamoyl phosphate-binding positions include 56 to 59 (STRT), Gln-83, Arg-107, and 134 to 137 (HPTQ). Residues Asn-168, Asp-232, and 236–237 (SM) each bind L-ornithine. Carbamoyl phosphate-binding positions include 274 to 275 (CL) and Arg-320.

This sequence belongs to the aspartate/ornithine carbamoyltransferase superfamily. OTCase family.

The protein localises to the cytoplasm. The catalysed reaction is carbamoyl phosphate + L-ornithine = L-citrulline + phosphate + H(+). It functions in the pathway amino-acid biosynthesis; L-arginine biosynthesis; L-arginine from L-ornithine and carbamoyl phosphate: step 1/3. In terms of biological role, reversibly catalyzes the transfer of the carbamoyl group from carbamoyl phosphate (CP) to the N(epsilon) atom of ornithine (ORN) to produce L-citrulline. This is Ornithine carbamoyltransferase from Shigella flexneri serotype 5b (strain 8401).